The following is a 315-amino-acid chain: Calumenin (315 aa).

An N-terminal signal peptide occupies residues 1-19 (MDLRQFLMCLSLCTAFALS). Tyr-47 is subject to Phosphotyrosine. Phosphothreonine is present on Thr-65. EF-hand domains are found at residues 68 to 103 (ESKE…AQKK), 104 to 139 (YIYD…TYLD), 151 to 186 (PIMV…EEYD), 188 to 223 (MKDI…HDGN), 229 to 264 (WVKT…SDYD), and 265 to 300 (HAEA…FVGS). A Phosphoserine modification is found at Ser-69. Asp-81, Asp-83, Asp-85, Glu-92, Asp-117, Asn-119, Asp-121, and Glu-128 together coordinate Ca(2+). Residue Asn-131 is glycosylated (N-linked (GlcNAc...) asparagine). Residues Asp-164, Asp-166, Asp-168, Glu-175, Asp-201, Asn-203, Asp-205, Glu-212, Asp-242, Asn-244, Asp-246, Lys-248, and Glu-253 each contribute to the Ca(2+) site. The residue at position 254 (Thr-254) is a Phosphothreonine. Ser-261 and Ser-277 each carry phosphoserine. Residues Asp-278, Asp-280, Asp-282, Lys-284, and Glu-289 each coordinate Ca(2+). The short motif at 312 to 315 (HDEF) is the Prevents secretion from ER element.

It belongs to the CREC family. As to quaternary structure, binds crotoxin. Interacts with GGCX.

It localises to the endoplasmic reticulum membrane. The protein resides in the golgi apparatus. Its subcellular location is the secreted. The protein localises to the melanosome. It is found in the sarcoplasmic reticulum lumen. Its function is as follows. Involved in regulation of vitamin K-dependent carboxylation of multiple N-terminal glutamate residues. Seems to inhibit gamma-carboxylase GGCX. Binds 7 calcium ions with a low affinity. This chain is Calumenin (Calu), found in Rattus norvegicus (Rat).